Consider the following 508-residue polypeptide: Anthranilate synthase component 1 (508 aa).

L-tryptophan contacts are provided by residues Ser-49 and 282–284; that span reads PYM. 317 to 318 provides a ligand contact to chorismate; the sequence is GT. Residue Glu-344 coordinates Mg(2+). Residues Tyr-432, Arg-452, 466–468, and Gly-468 each bind chorismate; that span reads GAG. Glu-481 is a binding site for Mg(2+).

This sequence belongs to the anthranilate synthase component I family. Heterotetramer consisting of two non-identical subunits: a beta subunit (TrpG) and a large alpha subunit (TrpE). Mg(2+) is required as a cofactor.

The enzyme catalyses chorismate + L-glutamine = anthranilate + pyruvate + L-glutamate + H(+). It participates in amino-acid biosynthesis; L-tryptophan biosynthesis; L-tryptophan from chorismate: step 1/5. With respect to regulation, feedback inhibited by tryptophan. In terms of biological role, part of a heterotetrameric complex that catalyzes the two-step biosynthesis of anthranilate, an intermediate in the biosynthesis of L-tryptophan. In the first step, the glutamine-binding beta subunit (TrpG) of anthranilate synthase (AS) provides the glutamine amidotransferase activity which generates ammonia as a substrate that, along with chorismate, is used in the second step, catalyzed by the large alpha subunit of AS (TrpE) to produce anthranilate. In the absence of TrpG, TrpE can synthesize anthranilate directly from chorismate and high concentrations of ammonia. This is Anthranilate synthase component 1 (trpE) from Geobacillus stearothermophilus (Bacillus stearothermophilus).